The primary structure comprises 1909 residues: MIEDKGPRVTDYFVVAGLTDTSTLLDQEINRLDTKSTGPKAPITDIAIIIKSAGETVPEGYTCVEATPSALQANLNYGSLKSPELFLCYKRGRDKPPLTDIGVLYEGKERLIPGCEVILATPYGRCANVNNSSTTSQRIFITYRRAPPVRPQNSLAVTDICVIVTSKGETPPHTFCKVDKNLNCGMWGSSVFLCYKKSVPASNAIAYKAGLIFRYPEEDYESFPLSESDVPLFCLPMGATIECWDPETKYPLPVFSTFVLTGSSAKKVYGAAIQFYEPYSRELLSEKQLMHLGLLTPVERKMVSKSINTNKCICLLSHWPFFEAFRKFLMFIYKLSVSGPHPLPIEKHISHFMQNIPFPSPQRPRILVQLSVHDALILSQPVSTPLPLSGANFSTLLMNLGPENCATLLLFVLLESKILLHSLRPAVLTGVAEAVVAMIFPFQWQCPYIPLCPLSLAAVLSAPLPFIVGVDSRYFDLHDPPQDVVCIDLDTNMLYVSDEKKNMNWKQLPKKPCKNLLSTLKKLYPQLSSVHQKTQEGSAIDMTPIEADFSWQKKMTQLEMEIQEAFLRFMASILKGYRTYLRPITEAPSNKATAADSLFDRQGFLKSRDRAYAKFYTLLSKTQIFIRFIEECSFVSDKDTGLAFFDDCIEKLFPDKGTEKTDKVDFDSAEDTRLIELDDSQKSEHTVFIMPPEPPPDDGKDLSPKYSYKYFPRLDLKLFDRPQELKLCFSRHPTGNSITKSPPLMAKRTKQEIKTAHKLAKRCYTNPPQWAKCLFSHCYSLWFICLPAYVRVSHPKVRALQQAYDVLIKMRKTDVDPLDEVCYRVVMQLCGLWGHPVLAVRVLFEMKTARIKPNAITYGYYNKVVLESPWPSSTRSGIFLWTKVRNVVRGLAQFRQPLKKTVQRSQVSSISGGQSDQGYGSKDELIKDDAEIHVPEEQAARELITKTKMQTEEVCDASAIVAKHSQPSPEPHSPTEPPAWGSSIVKVPSGIFDVNSRKSSTGSISNVLFSTQDPVEDAVFGEATNLKKNGDRGEKRQKHFPERSCSFSSESRAGMLLKKSSLDSNSSEMAIMMGADAKILTAALTCPKTSLLHIARTHSFENVSCHLPDSRTCMSESTWNPEHRSSPVPEMLEESQELLEPVVDDVPKTTATVDTYESLLSDSNSNQSRDLKTVSKDLRNKRSSLYGIAKVVQREDVETGLDPLSLLATECTGGKTPDSEDKLFSPVIARNLADEIESYMNLKSPLGSKSSSMELHREENRESGMTTAFIHALERRSSLPLDHGSPAQENPESEKSSPAVSRSKTFTGRFKQQTPSRTHKERSTSLSALVRSSPHGSLGSVVNSLSGLKLDNILSGPKIDVLKSGMKQAATVASKMWVAVASAYSYSDDEEETNRDYSFPAGLEDHILGENISPNTSISGLVPSELTQSNTSLGSSSSSGDVGKLHYPTGEVPFPRGMKGQDFEKSDHGSSQNTSMSSIYQNCAMEVLMSSCSQCRACGALVYDEEIMAGWTADDSNLNTACPFCKSNFLPLLNIEFKDLRGSASFFLKPSTSGDSLQSGSIPLANESLEHKPVSSLAEPDLINFMDFPKHNQIITEETGSAVEPSDEIKRASGDVQTMKISSVPNSLSKRNVSLTRSHSVGGPLQNIDFTQRPFHGISTVSLPNSLQEVVDPLGKRPNPPPVSVPYLSPLVLRKELESLLENEGDQVIHTSSFINQHPIIFWNLVWYFRRLDLPSNLPGLILTSEHCNEGVQLPLSSLSQDSKLVYIQLLWDNINLHQEPREPLYVSWRNFNSEKKSSLLSEEQQETSTLVETIRQSIQHNNVLKPINLLSQQMKPGMKRQRSLYREILFLSLVSLGRENIDIEAFDNEYGIAYNSLSSEILERLQKIDAPPSASVEWCRKCFGAPLI.

Positions 40–199 (KAPITDIAII…SVFLCYKKSV (160 aa)) constitute an MABP domain. Residues 191-364 (VFLCYKKSVP…NIPFPSPQRP (174 aa)) form the uDENN domain. Positions 385–521 (PLPLSGANFS…PCKNLLSTLK (137 aa)) constitute a cDENN domain. The 119-residue stretch at 523 to 641 (LYPQLSSVHQ…CSFVSDKDTG (119 aa)) folds into the dDENN domain. 3 positions are modified to phosphoserine: Ser703, Ser737, and Ser741. A PPR repeat occupies 821 to 855 (VCYRVVMQLCGLWGHPVLAVRVLFEMKTARIKPNA). Phosphoserine occurs at positions 953, 965, 968, and 973. Thr975 is modified (phosphothreonine). Phosphoserine is present on residues Ser989, Ser996, Ser1003, Ser1046, Ser1061, Ser1099, Ser1126, Ser1184, Ser1225, Ser1244, Ser1252, and Ser1278. 2 disordered regions span residues 1243 to 1263 (KSPL…NRES) and 1277 to 1338 (SSLP…HGSL). The segment covering 1296 to 1316 (SSPAVSRSKTFTGRFKQQTPS) has biased composition (polar residues). Phosphoserine is present on residues Ser1325, Ser1337, and Ser1346. The disordered stretch occupies residues 1419 to 1474 (SGLVPSELTQSNTSLGSSSSSGDVGKLHYPTGEVPFPRGMKGQDFEKSDHGSSQNT). Low complexity predominate over residues 1426–1440 (LTQSNTSLGSSSSSG). Positions 1459–1468 (KGQDFEKSDH) are enriched in basic and acidic residues. Ser1623, Ser1627, Ser1629, Ser1640, and Ser1799 each carry phosphoserine.

In terms of processing, phosphorylated in response to insulin.

It localises to the cytoplasmic vesicle membrane. Its subcellular location is the cell membrane. The protein localises to the cytoplasm. It is found in the cytosol. In terms of biological role, guanine nucleotide exchange factor (GEF) activating RAB10. Promotes the exchange of GDP to GTP, converting inactive GDP-bound RAB10 into its active GTP-bound form. Thereby, stimulates SLC2A4/GLUT4 glucose transporter-enriched vesicles delivery to the plasma membrane in response to insulin. This Homo sapiens (Human) protein is DENN domain-containing protein 4C (DENND4C).